A 300-amino-acid chain; its full sequence is Putative lysophosphatidic acid:oleoyl-CoA acyltransferase (300 aa).

A helical membrane pass occupies residues 32–52; that stretch reads WILIVVVMILRVPLCIISVTL. Residues 115–120 carry the HXXXXD motif motif; that stretch reads HSSPLD.

It belongs to the 1-acyl-sn-glycerol-3-phosphate acyltransferase family.

Its subcellular location is the lipid droplet. The protein resides in the endoplasmic reticulum membrane. The protein localises to the golgi apparatus membrane. The catalysed reaction is a 1-acyl-sn-glycero-3-phosphate + an acyl-CoA = a 1,2-diacyl-sn-glycero-3-phosphate + CoA. Acyl-CoA-dependent lysophosphatidic acid acyltransferase with preference for oleoyl-CoA. Involved in triacylglyceride homeostasis and lipid droplet formation. Involved in vacuolar protein sorting. This chain is Putative lysophosphatidic acid:oleoyl-CoA acyltransferase (vps66), found in Schizosaccharomyces pombe (strain 972 / ATCC 24843) (Fission yeast).